The primary structure comprises 124 residues: Large ribosomal subunit protein uL14 (124 aa).

It belongs to the universal ribosomal protein uL14 family. As to quaternary structure, part of the 50S ribosomal subunit. Forms a cluster with proteins L3 and L19. In the 70S ribosome, L14 and L19 interact and together make contacts with the 16S rRNA in bridges B5 and B8.

Functionally, binds to 23S rRNA. Forms part of two intersubunit bridges in the 70S ribosome. This Mycoplasmoides gallisepticum (strain R(low / passage 15 / clone 2)) (Mycoplasma gallisepticum) protein is Large ribosomal subunit protein uL14.